The following is a 123-amino-acid chain: Large ribosomal subunit protein bL19 (123 aa).

This sequence belongs to the bacterial ribosomal protein bL19 family.

Functionally, this protein is located at the 30S-50S ribosomal subunit interface and may play a role in the structure and function of the aminoacyl-tRNA binding site. The protein is Large ribosomal subunit protein bL19 of Acinetobacter baylyi (strain ATCC 33305 / BD413 / ADP1).